A 442-amino-acid polypeptide reads, in one-letter code: UDP-N-acetylmuramoylalanine--D-glutamate ligase (442 aa).

115 to 121 (GSNGKST) is an ATP binding site.

Belongs to the MurCDEF family.

It is found in the cytoplasm. It catalyses the reaction UDP-N-acetyl-alpha-D-muramoyl-L-alanine + D-glutamate + ATP = UDP-N-acetyl-alpha-D-muramoyl-L-alanyl-D-glutamate + ADP + phosphate + H(+). Its pathway is cell wall biogenesis; peptidoglycan biosynthesis. Its function is as follows. Cell wall formation. Catalyzes the addition of glutamate to the nucleotide precursor UDP-N-acetylmuramoyl-L-alanine (UMA). The sequence is that of UDP-N-acetylmuramoylalanine--D-glutamate ligase from Vibrio vulnificus (strain YJ016).